Consider the following 109-residue polypeptide: uncharacterized protein (109 aa).

Helical transmembrane passes span 16–36 (YIPL…YYGL), 54–74 (TVYF…LLCL), and 80–100 (FCSS…TLAM).

It is found in the membrane. This is an uncharacterized protein from Schizosaccharomyces pombe (strain 972 / ATCC 24843) (Fission yeast).